Reading from the N-terminus, the 837-residue chain is Toll-like receptor 4 (837 aa).

The N-terminal stretch at 1–23 is a signal peptide; the sequence is MMSASRLAGTLIPAMAFLSCVRP. Residues 24-629 lie on the Extracellular side of the membrane; sequence ESWEPCVVPN…SLNITCQMNK (606 aa). A disulfide bridge connects residues Cys-29 and Cys-38. N-linked (GlcNAc...) asparagine glycosylation is present at Asn-33. 5 LRR repeats span residues 53 to 74, 77 to 98, 101 to 122, 125 to 146, and 149 to 170; these read STKNLDLSFNPLRHLGSYSFFS, ELQVLDLSRCEIQTIEDGAYQS, HLSTLILTGNPIQSLALGAFSG, SLQKLVAVETNLASLENFPIGH, and TLKELNVAHNLIQSFKLPEYFS. An N-linked (GlcNAc...) asparagine glycan is attached at Asn-171. LRR repeat units lie at residues 174–197, 203–223, and 225–245; these read NLEYLDLSSNKIQSIYCTDLRVLH, NLSLDLSLNPMTFIQPGAFKE, and RLHKLTLRNNFDSLNVMKTCI. Residue Asn-203 is glycosylated (N-linked (GlcNAc...) asparagine). A disulfide bridge links Cys-279 with Cys-304. Asn-280 and Asn-307 each carry an N-linked (GlcNAc...) asparagine glycan. LRR repeat units follow at residues 329-349, 350-371, 372-392, 398-420, 421-442, 446-454, 470-493, 495-516, 519-540, and 543-563; these read GWQHLELVNCKFGQFPTLKLK, SLKRLTFTSNKGGNAFSEVDLP, SLEFLDLSRNGLSFKGCCSQS, SLKYLDLSFNGVITMSSNFLGLE, QLEHLDFQHSNLKQMSEFSVFL, NLIYLDISH, SLEVLKMAGNSFQENFLPDIFTEL, NLTFLDLSQCQLEQLSPTAFNS, SLQVLNMSHNNFFSLDTFPYKC, and SLRVLDYSLNHIMTSKKQELQ. A disulfide bridge links Cys-388 with Cys-389. N-linked (GlcNAc...) asparagine glycans are attached at residues Asn-495 and Asn-524. N-linked (GlcNAc...) asparagine glycosylation is present at Asn-573. The region spanning 577 to 627 is the LRRCT domain; that stretch reads NDFACTCEHQSFLQWIKDQRQLLVEVERMECATPSDKQGMPVLSLNITCQM. Disulfide bonds link Cys-581/Cys-607 and Cys-583/Cys-625. Asn-622 and Asn-628 each carry an N-linked (GlcNAc...) asparagine glycan. The helical transmembrane segment at 630 to 650 threads the bilayer; sequence TIIGVSVLSVLVVSVVAVLVY. The Cytoplasmic portion of the chain corresponds to 651-837; it reads KFYFHLMLLA…GCNWQEATSI (187 aa). Residues 670-813 form the TIR domain; it reads NVYDAFVIYS…IFWRRLRKAL (144 aa).

This sequence belongs to the Toll-like receptor family. In terms of assembly, belongs to the lipopolysaccharide (LPS) receptor, a multi-protein complex containing at least CD14, LY96 and TLR4. Binding to bacterial LPS leads to homodimerization. Interacts with LY96 via the extracellular domain. Interacts with MYD88 and TIRAP via their respective TIR domains. Interacts with TICAM2. Interacts with NOX4. Interacts with CNPY3 and HSP90B1; this interaction is required for proper folding in the endoplasmic reticulum. Interacts with MAP3K21; this interaction leads to negative regulation of TLR4 signaling. Interacts with CD36, following CD36 stimulation by oxLDL or amyloid-beta 42, and forms a heterodimer with TLR6. The trimeric complex is internalized and triggers inflammatory response. LYN kinase activity facilitates TLR4-TLR6 heterodimerization and signal initiation. Interacts with TICAM1 in response to LPS in a WDFY1-dependent manner. Interacts with WDFY1 in response to LPS. Interacts with SMPDL3B. Interacts with CEACAM1; upon lipopolysaccharide stimulation, forms a complex including TLR4 and the phosphorylated form of SYK and CEACAM1, which in turn, recruits PTPN6 that dephosphorylates SYK, reducing the production of reactive oxygen species (ROS) and lysosome disruption, which in turn, reduces the activity of the inflammasome. Interacts with RFTN1; the interaction occurs in response to lipopolysaccharide stimulation. Interacts with SCIMP; the interaction occurs in response to lipopolysaccharide stimulation and is enhanced by phosphorylation of SCIMP by LYN. This interaction facilitates the phosphorylation of TLR4 by LYN which elicits a selective cytokine response in macrophages. Interacts with TRAF3IP3. Interacts with TREM1; this interaction enhances TLR4-mediated inflammatory response. Interacts with ZG16B/PAUF. Interacts with CD82; this interaction inhibits TLR4-mediated signaling pathway. Post-translationally, phosphorylated on tyrosine residues by LYN after binding lipopolysaccharide. In terms of processing, ubiquitinated by RNF128 via 'Lys-28'-linked polyubiquitin chains, leading to proteasomal degradation.

It localises to the cell membrane. The protein localises to the early endosome. Its subcellular location is the cell projection. The protein resides in the ruffle. Transmembrane receptor that functions as a pattern recognition receptor recognizing pathogen- and damage-associated molecular patterns (PAMPs and DAMPs) to induce innate immune responses via downstream signaling pathways. At the plasma membrane, cooperates with LY96 to mediate the innate immune response to bacterial lipopolysaccharide (LPS). Also involved in LPS-independent inflammatory responses triggered by free fatty acids, such as palmitate, and Ni(2+). Mechanistically, acts via MYD88, TIRAP and TRAF6, leading to NF-kappa-B activation, cytokine secretion and the inflammatory response. Alternatively, CD14-mediated TLR4 internalization via endocytosis is associated with the initiation of a MYD88-independent signaling via the TICAM1-TBK1-IRF3 axis leading to type I interferon production. In addition to the secretion of proinflammatory cytokines, initiates the activation of NLRP3 inflammasome and formation of a positive feedback loop between autophagy and NF-kappa-B signaling cascade. In complex with TLR6, promotes inflammation in monocytes/macrophages by associating with TLR6 and the receptor CD86. Upon ligand binding, such as oxLDL or amyloid-beta 42, the TLR4:TLR6 complex is internalized and triggers inflammatory response, leading to NF-kappa-B-dependent production of CXCL1, CXCL2 and CCL9 cytokines, via MYD88 signaling pathway, and CCL5 cytokine, via TICAM1 signaling pathway. In myeloid dendritic cells, vesicular stomatitis virus glycoprotein G but not LPS promotes the activation of IRF7, leading to type I IFN production in a CD14-dependent manner. The chain is Toll-like receptor 4 (TLR4) from Gorilla gorilla gorilla (Western lowland gorilla).